Here is a 66-residue protein sequence, read N- to C-terminus: Large ribosomal subunit protein bL33c (66 aa).

This sequence belongs to the bacterial ribosomal protein bL33 family.

The protein resides in the plastid. The protein localises to the chloroplast. This is Large ribosomal subunit protein bL33c from Coffea arabica (Arabian coffee).